The chain runs to 657 residues: Heat shock protein hsp-6 (657 aa).

The N-terminal 27 residues, 1–27 (MLSARSFLSSARTIARSSLMSARSLSD), are a transit peptide targeting the mitochondrion. The segment at 637-657 (KNSGGDAQEAKTAEEPKKEQN) is disordered. Over residues 644–657 (QEAKTAEEPKKEQN) the composition is skewed to basic and acidic residues.

It belongs to the heat shock protein 70 family.

Its subcellular location is the mitochondrion. This Caenorhabditis elegans protein is Heat shock protein hsp-6.